The following is a 116-amino-acid chain: Large ribosomal subunit protein bL19 (116 aa).

The protein belongs to the bacterial ribosomal protein bL19 family.

Functionally, this protein is located at the 30S-50S ribosomal subunit interface and may play a role in the structure and function of the aminoacyl-tRNA binding site. In Mycoplasmopsis agalactiae (strain NCTC 10123 / CIP 59.7 / PG2) (Mycoplasma agalactiae), this protein is Large ribosomal subunit protein bL19.